A 227-amino-acid chain; its full sequence is PKHD-type hydroxylase BPSS1206 (227 aa).

The 101-residue stretch at 78–178 folds into the Fe2OG dioxygenase domain; the sequence is KVFPPLFNRY…RVASFFWIQS (101 aa). Histidine 96, aspartate 98, and histidine 159 together coordinate Fe cation. Arginine 169 is a binding site for 2-oxoglutarate.

Requires Fe(2+) as cofactor. It depends on L-ascorbate as a cofactor.

The polypeptide is PKHD-type hydroxylase BPSS1206 (Burkholderia pseudomallei (strain K96243)).